A 251-amino-acid polypeptide reads, in one-letter code: MSGHSKWATTKHKKAIIDGRRAKSFAKLIKNIEVAARMGGPDLAGNPGLELAVTKAKKTSVPNDNIDRAIKRGAGLTGEVVDYTEIMYEARGPQGSALLIECLTDNKNRAASEVRLAISRNGGTIADPGSVSYLFARKGVVVLPKNGLSEDDILMAVLEAGAEEVKDSGENWEIHSEPSDLQAIRDALKEAGIDYETDEAEFVPSMQVDLDVDGAKKFMKLVDALEDLDDVQNVYSNADLSEEVQAALDSE.

This sequence belongs to the TACO1 family.

The protein localises to the cytoplasm. The polypeptide is Probable transcriptional regulatory protein AAur_2300 (Paenarthrobacter aurescens (strain TC1)).